The following is an 826-amino-acid chain: E3 ubiquitin ligase PARAQUAT TOLERANCE 3 (826 aa).

In terms of domain architecture, DWNN spans 3-76 (IYYKFKSARD…NTSVLIRRVP (74 aa)). The segment at 203–216 (CHRCNVSGHFIQHC) adopts a CCHC-type zinc-finger fold. Residue Ser278 is modified to Phosphoserine. The RING-type; degenerate zinc finger occupies 288–326 (CPLCKEVMRDAALASKCCLKSYCDKCIRDHIIAKSMCVC). Composition is skewed to polar residues over residues 356–365 (SAENAGSMCQ), 396–406 (PSNNNETSTLK), and 435–454 (NIQGSSNGKEAAVSQLNTQP). 3 disordered regions span residues 356–406 (SAEN…STLK), 435–488 (NIQG…GPDY), and 585–826 (HPIM…RARA). Residue Ser397 is modified to Phosphoserine. The span at 588-624 (MGREEFEAKKTEMKRKRENEIRRSEGGNVVRDSEKSR) shows a compositional bias: basic and acidic residues. A compositionally biased stretch (polar residues) spans 625–635 (IMNNSAVTSSP). The segment covering 651-667 (DYDRRRRSDRSSPERQS) has biased composition (basic and acidic residues). Short sequence motifs (nuclear localization signal) lie at residues 668–675 (SRRFTSPP) and 695–702 (DRRRDRPR). A compositionally biased stretch (basic and acidic residues) spans 680–706 (RKSERDRHHDLDSEHDRRRDRPRETDR). A compositionally biased stretch (basic residues) spans 790 to 799 (FKRKPSRYKR). The residue at position 800 (Ser800) is a Phosphoserine. A compositionally biased stretch (basic and acidic residues) spans 809–826 (GDEHFRHSKRSKGERARA).

As to quaternary structure, interacts with PRMT13/PRMT4B in the nucleus. In terms of tissue distribution, expressed constitutively in both shoot and root tissues.

It is found in the nucleus. The enzyme catalyses S-ubiquitinyl-[E2 ubiquitin-conjugating enzyme]-L-cysteine + [acceptor protein]-L-lysine = [E2 ubiquitin-conjugating enzyme]-L-cysteine + N(6)-ubiquitinyl-[acceptor protein]-L-lysine.. Its function is as follows. E3 ubiquitin ligase acting as a negative regulator of oxidative stress tolerance, probably by mediating 26S proteasome-mediated degradation of PRMT13/PRMT4B, thus preventing APX1 and GPX1 accumulation via the reduction of histone H3 methylation (H3R17me2a). Confers sensitivity to cadmium CdCl(2) and salt NaCl stresses. This Arabidopsis thaliana (Mouse-ear cress) protein is E3 ubiquitin ligase PARAQUAT TOLERANCE 3.